Here is a 372-residue protein sequence, read N- to C-terminus: Cyclin-dependent kinase 9 (372 aa).

A Protein kinase domain is found at 19 to 315 (YEKLAKIGQG…SDDALNHDFF (297 aa)). ATP contacts are provided by residues 25–33 (IGQGTFGEV) and lysine 48. The active-site Proton acceptor is the aspartate 149. A disordered region spans residues 341–372 (PPRRRGGHMPQQPANQGRNPAATNQTEFDRVF). A compositionally biased stretch (polar residues) spans 352 to 366 (QPANQGRNPAATNQT).

The protein belongs to the protein kinase superfamily. CMGC Ser/Thr protein kinase family. CDC2/CDKX subfamily. As to quaternary structure, associates with cyclin-T to form P-TEFb. Also associates with cyclin-K.

Its subcellular location is the nucleus. The catalysed reaction is L-seryl-[protein] + ATP = O-phospho-L-seryl-[protein] + ADP + H(+). It carries out the reaction L-threonyl-[protein] + ATP = O-phospho-L-threonyl-[protein] + ADP + H(+). The enzyme catalyses [DNA-directed RNA polymerase] + ATP = phospho-[DNA-directed RNA polymerase] + ADP + H(+). In terms of biological role, member of the cyclin-dependent kinase pair (CDK9/cyclin-T) complex, also called positive transcription elongation factor b (P-TEFb), which facilitates the transition from abortive to production elongation by phosphorylating the CTD (C-terminal domain) of the large subunit of RNA polymerase II (RNAP II), SUPT5H and RDBP. The CDK9/cyclin-K complex also has a kinase activity toward CTD of RNAP II and can substitute for P-TEFb in vitro. The chain is Cyclin-dependent kinase 9 (CDK9) from Gallus gallus (Chicken).